The chain runs to 195 residues: GTP cyclohydrolase-2 (195 aa).

Residue 48 to 52 (RIHSE) participates in GTP binding. Residues cysteine 53, cysteine 64, and cysteine 66 each coordinate Zn(2+). GTP contacts are provided by residues glutamine 69, 90-92 (EGR), and threonine 112. Aspartate 124 (proton acceptor) is an active-site residue. The active-site Nucleophile is the arginine 126. GTP-binding residues include threonine 147 and lysine 152.

This sequence belongs to the GTP cyclohydrolase II family. It depends on Zn(2+) as a cofactor.

It catalyses the reaction GTP + 4 H2O = 2,5-diamino-6-hydroxy-4-(5-phosphoribosylamino)-pyrimidine + formate + 2 phosphate + 3 H(+). It participates in cofactor biosynthesis; riboflavin biosynthesis; 5-amino-6-(D-ribitylamino)uracil from GTP: step 1/4. Functionally, catalyzes the conversion of GTP to 2,5-diamino-6-ribosylamino-4(3H)-pyrimidinone 5'-phosphate (DARP), formate and pyrophosphate. The sequence is that of GTP cyclohydrolase-2 from Campylobacter fetus subsp. fetus (strain 82-40).